Reading from the N-terminus, the 203-residue chain is N-(5'-phosphoribosyl)anthranilate isomerase (203 aa).

It belongs to the TrpF family.

The enzyme catalyses N-(5-phospho-beta-D-ribosyl)anthranilate = 1-(2-carboxyphenylamino)-1-deoxy-D-ribulose 5-phosphate. It participates in amino-acid biosynthesis; L-tryptophan biosynthesis; L-tryptophan from chorismate: step 3/5. The polypeptide is N-(5'-phosphoribosyl)anthranilate isomerase (Geotalea uraniireducens (strain Rf4) (Geobacter uraniireducens)).